The primary structure comprises 202 residues: Small ribosomal subunit protein bS20c (202 aa).

A chloroplast-targeting transit peptide spans 1 to 79 (MATIVQCLSS…KPMRQLIVCE (79 aa)). The tract at residues 89-110 (SAAKRARQAEKRRVYNKSKKSE) is disordered.

Belongs to the bacterial ribosomal protein bS20 family. As to quaternary structure, part of the 30S ribosomal subunit.

The protein resides in the plastid. It localises to the chloroplast. Functionally, binds directly to 16S ribosomal RNA. This chain is Small ribosomal subunit protein bS20c (RPS20), found in Arabidopsis thaliana (Mouse-ear cress).